A 441-amino-acid chain; its full sequence is E3 ubiquitin-protein ligase APD1 (441 aa).

Transmembrane regions (helical) follow at residues 60 to 80 and 305 to 325; these read SNLY…FILI and IAYV…IQFC. An RING-type zinc finger spans residues 390–429; sequence CAICFDVPRDCFFLPCGHSVSCYECGTTMQEADGSCPICR.

In terms of tissue distribution, expressed in the shoot apical meristems (SAM), root tips and inflorescences, and, at low levels, in floral buds and pollen.

The protein localises to the endomembrane system. The protein resides in the vacuole membrane. It carries out the reaction S-ubiquitinyl-[E2 ubiquitin-conjugating enzyme]-L-cysteine + [acceptor protein]-L-lysine = [E2 ubiquitin-conjugating enzyme]-L-cysteine + N(6)-ubiquitinyl-[acceptor protein]-L-lysine.. Its pathway is protein modification; protein ubiquitination. Functionally, involved in pollen mitosis II (PMII) regulation during male gametogenesis. This chain is E3 ubiquitin-protein ligase APD1, found in Arabidopsis thaliana (Mouse-ear cress).